The chain runs to 410 residues: Regulator of microtubule dynamics protein 2 (410 aa).

A helical membrane pass occupies residues 9-28 (LILGIMAGTAGISLLAFWYH). Position 51 is a phosphoserine (Ser51). Residues 69–110 (QRRQLQILEKLNELLTNMEELKEEIRFLKETIPKLEECIQDE) adopt a coiled-coil conformation. Positions 120–151 (ISPQHRARKKKGTTVQRSATSNSSEEAESEGG) are disordered. Phosphoserine is present on Ser121. Positions 121–131 (SPQHRARKKKG) are enriched in basic residues. The residue at position 139 (Thr139) is a Phosphothreonine. Tyr152 is modified (phosphotyrosine). A phosphothreonine mark is found at Thr154 and Thr157.

Belongs to the RMDN family. Interacts with microtubules.

The protein localises to the membrane. It localises to the cytoplasm. It is found in the cytoskeleton. Its subcellular location is the spindle. The protein resides in the spindle pole. This chain is Regulator of microtubule dynamics protein 2 (Rmdn2), found in Mus musculus (Mouse).